Consider the following 68-residue polypeptide: MPKGKNPRVTVILECTSCVRNGADKKKESPGISRYITQKNRHNTPGRLELKKFCPYCYKHTIHGEIKK.

It belongs to the bacterial ribosomal protein bL33 family.

It is found in the plastid. It localises to the chloroplast. The protein is Large ribosomal subunit protein bL33c of Nymphaea alba (White water-lily).